Reading from the N-terminus, the 472-residue chain is ATP-dependent rRNA helicase rrp3 (472 aa).

The interval 1–52 (MPAIKKRKIAREAPQQEDHSDSEAHSSASEDAAPNTTEQEQEPSEAPKQAPK) is disordered. Residues 10–24 (AREAPQQEDHSDSEA) are compositionally biased toward basic and acidic residues. Positions 52–80 (KSFKELGLIEQLCEACDSMGYKAPTAIQA) match the Q motif motif. The Helicase ATP-binding domain occupies 83–254 (IPLALQGRDL…RASLQNPLRV (172 aa)). 96-103 (AETGSGKT) is an ATP binding site. The DEAD box signature appears at 202–205 (DEAD). Positions 282 to 426 (YLVYLLNEFV…EYPAEKDEVM (145 aa)) constitute a Helicase C-terminal domain. A disordered region spans residues 443–472 (MKNYDEKKGSRGKKFAKGKRSREDMDQEEG). Basic residues predominate over residues 452-462 (SRGKKFAKGKR).

Belongs to the DEAD box helicase family. DDX47/RRP3 subfamily. In terms of assembly, interacts with the SSU processome.

It is found in the nucleus. It carries out the reaction ATP + H2O = ADP + phosphate + H(+). Functionally, ATP-dependent rRNA helicase required for pre-ribosomal RNA processing. Involved in the maturation of the 35S-pre-rRNA and to its cleavage to mature 18S rRNA. The chain is ATP-dependent rRNA helicase rrp3 from Aspergillus oryzae (strain ATCC 42149 / RIB 40) (Yellow koji mold).